Consider the following 529-residue polypeptide: Probable threonine/serine exporter (529 aa).

10 consecutive transmembrane segments (helical) span residues 88–108 (ITVT…PVTI), 168–188 (FALG…LAAV), 212–232 (VFGA…AGQD), 234–254 (TALV…VGSM), 265–285 (ALAR…GILI), 312–332 (MPLP…CLTI), 344–364 (AGLS…AGFG), 365–385 (RVVA…LISI), 389–409 (APAL…LAVF), and 428–448 (LLEA…GEFL). A disordered region spans residues 482 to 501 (QPAKSQQPTGTGGQRWRSVA).

This sequence belongs to the ThrE exporter (TC 2.A.79) family.

The protein localises to the cell membrane. It carries out the reaction L-threonine(in) + H(+)(out) = L-threonine(out) + H(+)(in). Functionally, catalyzes the export of L-threonine and L-serine from the cell to the extracellular environment. Export is dependent on the proton motive force. Required for in vitro growth and survival of bacteria inside macrophages. Increased expression is associated with low-level amikacin (AMK) resistance. This is Probable threonine/serine exporter from Mycobacterium tuberculosis (strain ATCC 25618 / H37Rv).